Consider the following 98-residue polypeptide: U1-theraphotoxin-Ap1a (98 aa).

A signal peptide spans 1–23 (MRSLTLAAVLACSLLLVFHTSAA). Residues 24 to 50 (EELEVQDGHLMNPGDGDTALATVDDER) constitute a propeptide that is removed on maturation. 3 disulfide bridges follow: Cys-54–Cys-84, Cys-58–Cys-90, and Cys-72–Cys-95. The segment at 63–84 (DGKSKEGKPCKPKGDKNKDKKC) is disordered.

This sequence belongs to the neurotoxin 12 (Hwtx-2) family. 01 (Ap1a) subfamily. As to expression, expressed by the venom gland.

It localises to the secreted. Its function is as follows. Is toxic to both insects and mammals. Induces reversible paralysis when injected into S.frugiperda larvae. Reduces both the amplitude and frequency of responses from muscle (GF-TTM and GF-DLM) pathways in the D.melanogaster giant fiber circuit, suggesting an action at the neuromuscular junction, which is mediated by glutamatergic receptors. In mice, intracranial injection of 30 ug causes increased urination, myoclonus, hypermotility with circular movements followed by respiratory and generalized seizures resulting in death within 25-35 minutes of injection. The polypeptide is U1-theraphotoxin-Ap1a (Acanthoscurria paulensis (Brazilian giant black tarantula spider)).